Here is a 354-residue protein sequence, read N- to C-terminus: D-alanine--D-alanine ligase (354 aa).

The 211-residue stretch at 132–342 folds into the ATP-grasp domain; sequence KMVFERAGLP…FPSLVDRLLQ (211 aa). 168-223 is an ATP binding site; the sequence is EAQVGYPCFVKPANLGSSVGIAKVRNRSELEAALDNAASYDRRIIVEAGLTDIREV. Residues D295, E309, and N311 each coordinate Mg(2+).

The protein belongs to the D-alanine--D-alanine ligase family. Requires Mg(2+) as cofactor. Mn(2+) serves as cofactor.

The protein resides in the cytoplasm. The enzyme catalyses 2 D-alanine + ATP = D-alanyl-D-alanine + ADP + phosphate + H(+). The protein operates within cell wall biogenesis; peptidoglycan biosynthesis. Functionally, cell wall formation. This Synechocystis sp. (strain ATCC 27184 / PCC 6803 / Kazusa) protein is D-alanine--D-alanine ligase.